Here is a 148-residue protein sequence, read N- to C-terminus: UPF0756 membrane protein YeaL (148 aa).

Helical transmembrane passes span 14–34, 51–71, 86–106, and 121–141; these read ALGF…LIIV, LTVG…SGTL, LVAI…VALM, and VLGV…AGLV.

The protein belongs to the UPF0756 family.

It is found in the cell membrane. In Salmonella arizonae (strain ATCC BAA-731 / CDC346-86 / RSK2980), this protein is UPF0756 membrane protein YeaL.